The chain runs to 288 residues: Acetyl-coenzyme A carboxylase carboxyl transferase subunit beta (288 aa).

The region spanning 34–288 (LFAKCPACKH…HLVAFHGGGQ (255 aa)) is the CoA carboxyltransferase N-terminal domain. Zn(2+)-binding residues include Cys38, Cys41, Cys56, and Cys59. The C4-type zinc finger occupies 38 to 59 (CPACKHMIYKKDLGLAKICPTC).

This sequence belongs to the AccD/PCCB family. Acetyl-CoA carboxylase is a heterohexamer composed of biotin carboxyl carrier protein (AccB), biotin carboxylase (AccC) and two subunits each of ACCase subunit alpha (AccA) and ACCase subunit beta (AccD). It depends on Zn(2+) as a cofactor.

It is found in the cytoplasm. It catalyses the reaction N(6)-carboxybiotinyl-L-lysyl-[protein] + acetyl-CoA = N(6)-biotinyl-L-lysyl-[protein] + malonyl-CoA. It functions in the pathway lipid metabolism; malonyl-CoA biosynthesis; malonyl-CoA from acetyl-CoA: step 1/1. In terms of biological role, component of the acetyl coenzyme A carboxylase (ACC) complex. Biotin carboxylase (BC) catalyzes the carboxylation of biotin on its carrier protein (BCCP) and then the CO(2) group is transferred by the transcarboxylase to acetyl-CoA to form malonyl-CoA. This chain is Acetyl-coenzyme A carboxylase carboxyl transferase subunit beta, found in Streptococcus pyogenes serotype M1.